The primary structure comprises 149 residues: UPF0260 protein PFLU_1520 (149 aa).

It belongs to the UPF0260 family.

This chain is UPF0260 protein PFLU_1520, found in Pseudomonas fluorescens (strain SBW25).